A 344-amino-acid polypeptide reads, in one-letter code: L-rhamnose-proton symporter (344 aa).

10 consecutive transmembrane segments (helical) span residues 4–24 (AITMGIFWHLIGAASAACFYA), 38–58 (WSVGGIVSWIILPWTISALLL), 68–88 (FSLSTLLPVFLFGAMWGIGNI), 101–121 (MGIGIAIGITLIVGTLMTPII), 137–157 (TLLGVLVALIGVGIVTRAGQL), 175–195 (LVLAVMCGIFSAGMSFAMNAA), 214–234 (LPSYVVIMGGGAIINLGFCFI), 259–279 (VLLSALGGLMWYLQFFFYAWG), 290–310 (ISWMLHMSFYVLCGGIVGLVL), and 323–343 (VLSLGCVVIIVAANIVGIGMA).

The protein belongs to the L-rhamnose transporter (TC 2.A.7.6) family.

It localises to the cell inner membrane. The enzyme catalyses L-rhamnopyranose(in) + H(+)(in) = L-rhamnopyranose(out) + H(+)(out). Its function is as follows. Uptake of L-rhamnose across the cytoplasmic membrane with the concomitant transport of protons into the cell (symport system). This is L-rhamnose-proton symporter from Shigella sonnei (strain Ss046).